Here is a 254-residue protein sequence, read N- to C-terminus: 3-deoxy-manno-octulosonate cytidylyltransferase (254 aa).

Belongs to the KdsB family.

It localises to the cytoplasm. It catalyses the reaction 3-deoxy-alpha-D-manno-oct-2-ulosonate + CTP = CMP-3-deoxy-beta-D-manno-octulosonate + diphosphate. It participates in nucleotide-sugar biosynthesis; CMP-3-deoxy-D-manno-octulosonate biosynthesis; CMP-3-deoxy-D-manno-octulosonate from 3-deoxy-D-manno-octulosonate and CTP: step 1/1. It functions in the pathway bacterial outer membrane biogenesis; lipopolysaccharide biosynthesis. Functionally, activates KDO (a required 8-carbon sugar) for incorporation into bacterial lipopolysaccharide in Gram-negative bacteria. In Ectopseudomonas mendocina (strain ymp) (Pseudomonas mendocina), this protein is 3-deoxy-manno-octulosonate cytidylyltransferase.